The sequence spans 163 residues: Large ribosomal subunit protein uL10 (163 aa).

The protein belongs to the universal ribosomal protein uL10 family. As to quaternary structure, part of the ribosomal stalk of the 50S ribosomal subunit. The N-terminus interacts with L11 and the large rRNA to form the base of the stalk. The C-terminus forms an elongated spine to which L12 dimers bind in a sequential fashion forming a multimeric L10(L12)X complex.

Forms part of the ribosomal stalk, playing a central role in the interaction of the ribosome with GTP-bound translation factors. The polypeptide is Large ribosomal subunit protein uL10 (Histophilus somni (strain 2336) (Haemophilus somnus)).